Reading from the N-terminus, the 233-residue chain is Lysine exporter LysE (233 aa).

Topologically, residues 1 to 2 (ME) are cytoplasmic. Residues 3-23 (IFITGLLLGASLLLSIGPQNV) form a helical membrane-spanning segment. Over 24–65 (LVIKQGIKREGLIAVLLVCLISDVFLFIAGTLGVDLLSNAAP) the chain is Periplasmic. The helical transmembrane segment at 66–86 (IVLDIMRWGGIAYLLWFAVMA) threads the bilayer. Residues 87 to 143 (AKDAMTNKVEAPQIIEETEPTVPDDTPLGGSAVATDTRNRVRVEVSVDKQRVWVKPM) lie on the Cytoplasmic side of the membrane. A helical transmembrane segment spans residues 144–164 (LMAIVLTWLNPNAYLDAFVFI). Topologically, residues 165–176 (GGVGAQYGDTGR) are periplasmic. The chain crosses the membrane as a helical span at residues 177 to 197 (WIFAAGAFAASLIWFPLVGFG). Residues 198-212 (AAALSRPLSSPKVWR) are Cytoplasmic-facing. The helical transmembrane segment at 213-233 (WINVVVAVVMTALAIKLMLMG) threads the bilayer.

This sequence belongs to the LysE/ArgO transporter (TC 2.A.75) family.

Its subcellular location is the cell inner membrane. Its activity is regulated as follows. Transport process is modulated by three forces: the membrane potential, the chemical potential of lysine, and the proton gradient. Strongly inhibited by CCCP and valinomycin. Functionally, catalyzes the efflux of L-lysine. Can also export L-arginine and L-citrulline. The lysEG system prevents bacteriostasis due to elevated L-lysine or L-arginine concentrations that arise during growth in the presence of peptides or in mutants possessing a deregulated biosynthesis pathway. In vitro, can also export D-lysine during biotechnological production of D-amino acids. The polypeptide is Lysine exporter LysE (Corynebacterium glutamicum (strain ATCC 13032 / DSM 20300 / JCM 1318 / BCRC 11384 / CCUG 27702 / LMG 3730 / NBRC 12168 / NCIMB 10025 / NRRL B-2784 / 534)).